The following is a 311-amino-acid chain: Methionyl-tRNA formyltransferase (311 aa).

Position 112–115 (112–115 (SLLP)) interacts with (6S)-5,6,7,8-tetrahydrofolate.

Belongs to the Fmt family.

It catalyses the reaction L-methionyl-tRNA(fMet) + (6R)-10-formyltetrahydrofolate = N-formyl-L-methionyl-tRNA(fMet) + (6S)-5,6,7,8-tetrahydrofolate + H(+). In terms of biological role, attaches a formyl group to the free amino group of methionyl-tRNA(fMet). The formyl group appears to play a dual role in the initiator identity of N-formylmethionyl-tRNA by promoting its recognition by IF2 and preventing the misappropriation of this tRNA by the elongation apparatus. This Bradyrhizobium sp. (strain BTAi1 / ATCC BAA-1182) protein is Methionyl-tRNA formyltransferase.